Consider the following 227-residue polypeptide: Cytidylate kinase (227 aa).

12–20 contacts ATP; that stretch reads GPSGVGKGT.

Belongs to the cytidylate kinase family. Type 1 subfamily.

Its subcellular location is the cytoplasm. It carries out the reaction CMP + ATP = CDP + ADP. The enzyme catalyses dCMP + ATP = dCDP + ADP. This is Cytidylate kinase from Shewanella denitrificans (strain OS217 / ATCC BAA-1090 / DSM 15013).